The sequence spans 64 residues: Disintegrin VA6 (64 aa).

Positions 1–64 (NSANPCCDPV…SDCPRNPYKS (64 aa)) constitute a Disintegrin domain. 4 disulfide bridges follow: cysteine 6–cysteine 29, cysteine 20–cysteine 26, cysteine 25–cysteine 50, and cysteine 38–cysteine 57. The short motif at 42 to 44 (RGD) is the Cell attachment site element.

Belongs to the venom metalloproteinase (M12B) family. P-II subfamily. P-IId sub-subfamily. In terms of assembly, homodimer; disulfide-linked. As to expression, expressed by the venom gland.

It localises to the secreted. In terms of biological role, poor inhibitor of platelet aggregation. The disintegrin inhibits the adhesion of cells expressing the RGD-dependent integrin alpha-5/beta-1 (ITGA5/ITGB1) to immobilized fibronectin. Inhibition on alpha-IIb/beta-3 (ITGA2B/ITGB3) is low, and there is no inhibition on alpha-1/beta-1 (ITGA1/ITGB1), alpha-2/beta-1 (ITGA2/ITGB1) and alpha-6/beta-1 (ITGA6/ITGB1). This chain is Disintegrin VA6, found in Vipera ammodytes ammodytes (Western sand viper).